Consider the following 374-residue polypeptide: Putative glutamate--cysteine ligase 2 (374 aa).

Belongs to the glutamate--cysteine ligase type 2 family. YbdK subfamily.

It carries out the reaction L-cysteine + L-glutamate + ATP = gamma-L-glutamyl-L-cysteine + ADP + phosphate + H(+). In terms of biological role, ATP-dependent carboxylate-amine ligase which exhibits weak glutamate--cysteine ligase activity. The chain is Putative glutamate--cysteine ligase 2 from Acidovorax sp. (strain JS42).